The chain runs to 506 residues: 2-isopropylmalate synthase (506 aa).

Positions 6 to 267 constitute a Pyruvate carboxyltransferase domain; it reads IIVFDTTLRD…YTDIVTKEIY (262 aa). Mn(2+) is bound by residues aspartate 15, histidine 201, histidine 203, and asparagine 237. Residues 391–506 form a regulatory domain region; the sequence is SIQTLSTSSC…LNSYLSMKNR (116 aa).

The protein belongs to the alpha-IPM synthase/homocitrate synthase family. LeuA type 1 subfamily. Homodimer. Mn(2+) serves as cofactor.

The protein resides in the cytoplasm. It carries out the reaction 3-methyl-2-oxobutanoate + acetyl-CoA + H2O = (2S)-2-isopropylmalate + CoA + H(+). Its pathway is amino-acid biosynthesis; L-leucine biosynthesis; L-leucine from 3-methyl-2-oxobutanoate: step 1/4. Functionally, catalyzes the condensation of the acetyl group of acetyl-CoA with 3-methyl-2-oxobutanoate (2-ketoisovalerate) to form 3-carboxy-3-hydroxy-4-methylpentanoate (2-isopropylmalate). The chain is 2-isopropylmalate synthase from Campylobacter fetus subsp. fetus (strain 82-40).